The following is a 251-amino-acid chain: uncharacterized protein (251 aa).

The tract at residues 1–22 is disordered; sequence MTQLPELGLRSPNNKSPTGPHP.

This is an uncharacterized protein from Homo sapiens (Human).